The primary structure comprises 308 residues: Serine/threonine-protein phosphatase 4 catalytic subunit (308 aa).

Mn(2+) is bound by residues Asp51, His53, Asp79, and Asn111. The Proton donor role is filled by His112. His161 and His235 together coordinate Mn(2+). Leu308 is subject to Leucine methyl ester.

Belongs to the PPP phosphatase family. PP-4 (PP-X) subfamily. As to quaternary structure, catalytic subunit of the histone H2A phosphatase complex (HTP-C) containing PPH3, PSY2 and PSY4. It depends on Mn(2+) as a cofactor.

It is found in the cytoplasm. It localises to the nucleus. It carries out the reaction O-phospho-L-seryl-[protein] + H2O = L-seryl-[protein] + phosphate. The catalysed reaction is O-phospho-L-threonyl-[protein] + H2O = L-threonyl-[protein] + phosphate. Its function is as follows. Forms the histone H2A phosphatase complex in association with the regulatory subunits PSY2 and PSY4, which dephosphorylates H2AS128ph (gamma-H2A) that has been displaced from sites of DNA lesions in the double-stranded DNA break repair process. Dephosphorylation is necessary for efficient recovery from the DNA damage checkpoint. This Kluyveromyces lactis (strain ATCC 8585 / CBS 2359 / DSM 70799 / NBRC 1267 / NRRL Y-1140 / WM37) (Yeast) protein is Serine/threonine-protein phosphatase 4 catalytic subunit (PPH3).